The following is an 881-amino-acid chain: Envelope glycoprotein gp160 (881 aa).

The first 19 residues, 1–19 (MGCLGNQLLIAILLLSVYG), serve as a signal peptide directing secretion. At 20–696 (IYCTQYVTVF…ASWIKYIQYG (677 aa)) the chain is on the extracellular side. Residue N37 is glycosylated (N-linked (GlcNAc...) asparagine; by host). A disulfide bond links C44 and C57. 17 N-linked (GlcNAc...) asparagine; by host glycosylation sites follow: N70, N114, N148, N158, N186, N200, N204, N214, N246, N249, N280, N286, N297, N308, N318, N373, and N379. Intrachain disulfides connect C101-C222, C108-C213, C113-C170, C235-C265, and C245-C257. The V1 stretch occupies residues 113–169 (CNKSETDRWGLTKSSTTITTAAPTSAPVSEKIDMVNETSSCIAQNNCTGLEQEQMIS). The V2 stretch occupies residues 170-213 (CKFTMTGLKRDKTKEYNETWYSTDLVCEQGNSTDNESRCYMNHC). The tract at residues 313-345 (CRRPGNKTVLPVTIMSGLVFHSQPLTDRPKQAW) is V3. A disulfide bridge connects residues C313 and C346. 2 cysteine pairs are disulfide-bonded: C397–C461 and C404–C434. Positions 404-434 (CKMNWFLNWVEDRDVTTQRPKERHRRNYVPC) are V4. N-linked (GlcNAc...) asparagine; by host glycosylation is found at N462 and N478. The tract at residues 477–484 (GNQTSITM) is V5. Residues 528–548 (GVFVLGFLGFLATAGSAMGAA) are fusion peptide. Residues 591–607 (LQTRVTAIEKYLEDQAQ) are immunosuppression. Residues N627, N636, and N652 are each glycosylated (N-linked (GlcNAc...) asparagine; by host). Residues 636-668 (NDTWQEWERKVDFLEENITALLEEAQIQQEKNM) are a coiled coil. Residues 673-694 (KLNSWDVFGNWFDLASWIKYIQ) form an MPER; binding to GalCer region. The chain crosses the membrane as a helical span at residues 697-717 (IYVVVGVILLRIVIYIVQMLA). At 718 to 881 (KLRQGYRPVF…IRQGLELTLL (164 aa)) the chain is on the cytoplasmic side. The short motif at 723–726 (YRPV) is the YXXV motif; contains endocytosis signal element. The segment at 737–761 (THTQQDPALPTREGKEGDGGEGGGN) is disordered. Residue C789 is the site of S-palmitoyl cysteine; by host attachment. Positions 880-881 (LL) match the Di-leucine internalization motif motif.

The mature envelope protein (Env) consists of a homotrimer of non-covalently associated gp120-gp41 heterodimers. The resulting complex protrudes from the virus surface as a spike. Interacts with host CD4 and CCR5. Gp120 also interacts with the C-type lectins CD209/DC-SIGN and CLEC4M/DC-SIGNR (collectively referred to as DC-SIGN(R)). As to quaternary structure, the mature envelope protein (Env) consists of a homotrimer of non-covalently associated gp120-gp41 heterodimers. The resulting complex protrudes from the virus surface as a spike. In terms of processing, specific enzymatic cleavages in vivo yield mature proteins. Envelope glycoproteins are synthesized as an inactive precursor that is heavily N-glycosylated and processed likely by host cell furin in the Golgi to yield the mature SU and TM proteins. The cleavage site between SU and TM requires the minimal sequence [KR]-X-[KR]-R. Post-translationally, palmitoylation of the transmembrane protein and of Env polyprotein (prior to its proteolytic cleavage) is essential for their association with host cell membrane lipid rafts. Palmitoylation is therefore required for envelope trafficking to classical lipid rafts, but not for viral replication.

The protein localises to the virion membrane. It localises to the host cell membrane. Its subcellular location is the host endosome membrane. The surface protein gp120 (SU) attaches the virus to the host lymphoid cell by binding to the primary receptor CD4. This interaction induces a structural rearrangement creating a high affinity binding site for a chemokine coreceptor like CCR5. This peculiar 2 stage receptor-interaction strategy allows gp120 to maintain the highly conserved coreceptor-binding site in a cryptic conformation, protected from neutralizing antibodies. These changes are transmitted to the transmembrane protein gp41 and are thought to activate its fusogenic potential by unmasking its fusion peptide. Functionally, surface protein gp120 (SU) may target the virus to gut-associated lymphoid tissue (GALT) by binding host ITGA4/ITGB7 (alpha-4/beta-7 integrins), a complex that mediates T-cell migration to the GALT. Interaction between gp120 and ITGA4/ITGB7 would allow the virus to enter GALT early in the infection, infecting and killing most of GALT's resting CD4+ T-cells. This T-cell depletion is believed to be the major insult to the host immune system leading to AIDS. In terms of biological role, the surface protein gp120 is a ligand for CD209/DC-SIGN and CLEC4M/DC-SIGNR, which are respectively found on dendritic cells (DCs), and on endothelial cells of liver sinusoids and lymph node sinuses. These interactions allow capture of viral particles at mucosal surfaces by these cells and subsequent transmission to permissive cells. DCs are professional antigen presenting cells, critical for host immunity by inducing specific immune responses against a broad variety of pathogens. They act as sentinels in various tissues where they take up antigen, process it, and present it to T-cells following migration to lymphoid organs. SIV subverts the migration properties of dendritic cells to gain access to CD4+ T-cells in lymph nodes. Virus transmission to permissive T-cells occurs either in trans (without DCs infection, through viral capture and transmission), or in cis (following DCs productive infection, through the usual CD4-gp120 interaction), thereby inducing a robust infection. In trans infection, bound virions remain infectious over days and it is proposed that they are not degraded, but protected in non-lysosomal acidic organelles within the DCs close to the cell membrane thus contributing to the viral infectious potential during DCs' migration from the periphery to the lymphoid tissues. On arrival at lymphoid tissues, intact virions recycle back to DCs' cell surface allowing virus transmission to CD4+ T-cells. Virion capture also seems to lead to MHC-II-restricted viral antigen presentation, and probably to the activation of SIV-specific CD4+ cells. Its function is as follows. The transmembrane protein gp41 (TM) acts as a class I viral fusion protein. Under the current model, the protein has at least 3 conformational states: pre-fusion native state, pre-hairpin intermediate state, and post-fusion hairpin state. During fusion of viral and target intracellular membranes, the coiled coil regions (heptad repeats) assume a trimer-of-hairpins structure, positioning the fusion peptide in close proximity to the C-terminal region of the ectodomain. The formation of this structure appears to drive apposition and subsequent fusion of viral and target cell membranes. Complete fusion occurs in host cell endosomes. The virus undergoes clathrin-dependent internalization long before endosomal fusion, thus minimizing the surface exposure of conserved viral epitopes during fusion and reducing the efficacy of inhibitors targeting these epitopes. Membranes fusion leads to delivery of the nucleocapsid into the cytoplasm. The envelope glycoprotein gp160 precursor down-modulates cell surface CD4 antigen by interacting with it in the endoplasmic reticulum and blocking its transport to the cell surface. Functionally, the gp120-gp41 heterodimer allows rapid transcytosis of the virus through CD4 negative cells such as simple epithelial monolayers of the intestinal, rectal and endocervical epithelial barriers. Both gp120 and gp41 specifically recognize glycosphingolipids galactosyl-ceramide (GalCer) or 3' sulfo-galactosyl-ceramide (GalS) present in the lipid rafts structures of epithelial cells. Binding to these alternative receptors allows the rapid transcytosis of the virus through the epithelial cells. This transcytotic vesicle-mediated transport of virions from the apical side to the basolateral side of the epithelial cells does not involve infection of the cells themselves. The chain is Envelope glycoprotein gp160 (env) from Simian immunodeficiency virus (isolate K6W) (SIV-mac).